The following is a 286-amino-acid chain: tRNA (guanine-N(7)-)-methyltransferase (286 aa).

A phosphoserine mark is found at S7 and S59. S-adenosyl-L-methionine contacts are provided by residues G103, 126–127, 161–162, and C181; these read EI and NA. D184 is an active-site residue. 259–261 serves as a coordination point for S-adenosyl-L-methionine; sequence TEE.

Belongs to the class I-like SAM-binding methyltransferase superfamily. TrmB family. In terms of assembly, forms a complex with TRM82.

It localises to the nucleus. The enzyme catalyses guanosine(46) in tRNA + S-adenosyl-L-methionine = N(7)-methylguanosine(46) in tRNA + S-adenosyl-L-homocysteine. The protein operates within tRNA modification; N(7)-methylguanine-tRNA biosynthesis. Methyltransferase that catalyzes the formation of N(7)-methylguanine at position 46 (m7G46) in tRNA, a modification required to maintain stability of tRNAs; its absence resulting in tRNA decay. Both the D-stem and T-stem structures of tRNAs are required for efficient methyltransferase activity. The polypeptide is tRNA (guanine-N(7)-)-methyltransferase (Saccharomyces cerevisiae (strain YJM789) (Baker's yeast)).